Here is a 777-residue protein sequence, read N- to C-terminus: C6 finger domain transcription factor adaR (777 aa).

The interval 1–20 is disordered; that stretch reads MEQRSSPARSLPPRKTTTTP. The segment at residues 24-50 is a DNA-binding region (zn(2)-C6 fungal-type); it reads CELCRKRKVKCDKLTPCTNCAASGTVC. 6 disordered regions span residues 61–85, 111–144, 182–213, 419–440, 468–496, and 655–699; these read GRHA…TDRI, NSHS…NPNT, SSLA…VLGL, PQHI…PNRE, RKVD…DPSW, and LPPS…PTGS. Over residues 475–489 the composition is skewed to low complexity; sequence PTPTSSTSGTSTSRS. Residues 668–677 show a composition bias toward pro residues; sequence ATPPTFPGVP.

The protein resides in the nucleus. Its function is as follows. Transcription factor that specifically regulates the expression of the ada gene cluster involved in the biosynthesis of the linear tetracyclic TAN-1612 neuropeptide Y receptor antagonist. This is C6 finger domain transcription factor adaR from Aspergillus niger (strain ATCC MYA-4892 / CBS 513.88 / FGSC A1513).